The following is a 95-amino-acid chain: Aspartyl/glutamyl-tRNA(Asn/Gln) amidotransferase subunit C (95 aa).

The protein belongs to the GatC family. As to quaternary structure, heterotrimer of A, B and C subunits.

It catalyses the reaction L-glutamyl-tRNA(Gln) + L-glutamine + ATP + H2O = L-glutaminyl-tRNA(Gln) + L-glutamate + ADP + phosphate + H(+). The catalysed reaction is L-aspartyl-tRNA(Asn) + L-glutamine + ATP + H2O = L-asparaginyl-tRNA(Asn) + L-glutamate + ADP + phosphate + 2 H(+). Functionally, allows the formation of correctly charged Asn-tRNA(Asn) or Gln-tRNA(Gln) through the transamidation of misacylated Asp-tRNA(Asn) or Glu-tRNA(Gln) in organisms which lack either or both of asparaginyl-tRNA or glutaminyl-tRNA synthetases. The reaction takes place in the presence of glutamine and ATP through an activated phospho-Asp-tRNA(Asn) or phospho-Glu-tRNA(Gln). The polypeptide is Aspartyl/glutamyl-tRNA(Asn/Gln) amidotransferase subunit C (Methylococcus capsulatus (strain ATCC 33009 / NCIMB 11132 / Bath)).